The sequence spans 500 residues: MPSPTKAAEAATKATATSDCSCSAASVEQRAPSNAANPSSSLATSGKIGGKTQDQTAAINKQKEFAVPNETSDSGFISGPQSSQIFSEEIVPDSEEQDKDQQESAPQKEQPVVLDSGIIDEEEDQEEQEKEEEHQDTTTATADSMRLKHSADTGIPQWTVESHLVSRGEQLNNLGQSSSTQITGRSKVQSSTASTANANPSGSGATSSAPPSSINIMNAWEQFYQQNDDGDTPLHLACISGSVDVVAALIRMAPHPCLLNIQNDVAQTPLHLAALTAQPNIMRILLLAGAEPTVRDRHGNTALHLSCIAGEKQCVRALTEKFGATEIHEAHRQYGHRSNDKAVSSLSYACLPADLEIRNYDGERCVHLAAEAGHIDILRILVSHGADINAREGKSGRTPLHIAIEGCNEDLANFLLDECEKLNLETATYAGLTAYQFACIMNKSRMQNILEKRGAETVTPPDSDYDSSDIEDLDDTKMYDRFGDPRYFVSYNGGNPMTVA.

Low complexity predominate over residues 1–43 (MPSPTKAAEAATKATATSDCSCSAASVEQRAPSNAANPSSSLA). Disordered stretches follow at residues 1–148 (MPSP…MRLK) and 171–212 (LNNL…APPS). The residue at position 45 (Ser-45) is a Phosphoserine; by PKC. Polar residues predominate over residues 69 to 86 (NETSDSGFISGPQSSQIF). Residues 118 to 130 (IIDEEEDQEEQEK) show a composition bias toward acidic residues. Ser-144 carries the post-translational modification Phosphoserine; by PKC. Polar residues predominate over residues 171–189 (LNNLGQSSSTQITGRSKVQ). The residue at position 183 (Thr-183) is a Phosphothreonine; by PKC. Positions 190-212 (SSTASTANANPSGSGATSSAPPS) are enriched in low complexity. ANK repeat units follow at residues 229–261 (DGDT…LLNI), 265–294 (VAQT…EPTV), 298–327 (HGNT…ATEI), 361–390 (DGER…DINA), and 395–424 (SGRT…KLNL). 2 positions are modified to phosphothreonine; by PKC: Thr-293 and Thr-319. Ser-395 carries the phosphoserine; by PKC modification.

This sequence belongs to the NF-kappa-B inhibitor family. Phosphorylated isoform A binds to dorsal (dl); inhibits dl translocation to the nucleus and therefore from binding to DNA. In vitro, interacts with IKKbeta. Interacts with cactin and kappa-B-Ras. In terms of processing, activated IKKbeta phosphorylates cact. In terms of tissue distribution, expressed in ovary (at protein level).

The protein localises to the cytoplasm. Functionally, involved in the formation of the dorsoventral pattern. It inhibits nuclear translocation of the dorsal morphogen in the dorsal region of the embryo. Acts as a negative regulator of the NF-kappa-B (rel) signaling pathway. Cact is degraded by IKKbeta, this is essential for NF-kappa-B (rel) activation. This Drosophila melanogaster (Fruit fly) protein is NF-kappa-B inhibitor cactus (cact).